A 201-amino-acid chain; its full sequence is Guanylate kinase (201 aa).

The region spanning 7–186 is the Guanylate kinase-like domain; sequence GVLLVLSSPS…SVEEISSILN (180 aa). Position 14–21 (14–21) interacts with ATP; that stretch reads SPSGAGKT.

This sequence belongs to the guanylate kinase family.

The protein localises to the cytoplasm. It carries out the reaction GMP + ATP = GDP + ADP. Functionally, essential for recycling GMP and indirectly, cGMP. The sequence is that of Guanylate kinase from Wolbachia pipientis wMel.